The following is a 189-amino-acid chain: Chitin synthase 2 (189 aa).

Belongs to the chitin synthase family. Class II subfamily.

It is found in the cell membrane. It catalyses the reaction [(1-&gt;4)-N-acetyl-beta-D-glucosaminyl](n) + UDP-N-acetyl-alpha-D-glucosamine = [(1-&gt;4)-N-acetyl-beta-D-glucosaminyl](n+1) + UDP + H(+). In terms of biological role, polymerizes chitin, a structural polymer of the cell wall and septum, by transferring the sugar moiety of UDP-GlcNAc to the non-reducing end of the growing chitin polymer. The sequence is that of Chitin synthase 2 (CHS2) from Exophiala exophialae (Black yeast-like fungus).